A 344-amino-acid chain; its full sequence is Centromere protein L (344 aa).

Residue Ser39 is modified to Phosphoserine. A Phosphothreonine modification is found at Thr43. Residue Ser53 is modified to Phosphoserine.

Belongs to the CENP-L/IML3 family. As to quaternary structure, component of the CENPA-CAD complex, composed of CENPI, CENPK, CENPL, CENPO, CENPP, CENPQ, CENPR and CENPS. The CENPA-CAD complex interacts with the CENPA-NAC complex, at least composed of CENPA, CENPC, CENPH, CENPM, CENPN, CENPT and CENPU.

The protein resides in the nucleus. Its subcellular location is the chromosome. It localises to the centromere. Component of the CENPA-CAD (nucleosome distal) complex, a complex recruited to centromeres which is involved in assembly of kinetochore proteins, mitotic progression and chromosome segregation. May be involved in incorporation of newly synthesized CENPA into centromeres via its interaction with the CENPA-NAC complex. In Homo sapiens (Human), this protein is Centromere protein L (CENPL).